The chain runs to 866 residues: Fibrinogen alpha chain (866 aa).

The N-terminal stretch at 1-19 (MFSMRIVCLVLSVVGTAWT) is a signal peptide. Ser-22 bears the Phosphoserine mark. The interval 36-38 (GPR) is alpha-chain polymerization, binding distal domain of another fibrin gamma chain. Phosphoserine; by FAM20C is present on Ser-45. Ser-50 is modified (phosphoserine). The residue at position 56 (Ser-56) is a Phosphoserine; by FAM20C. Residues 68–631 (CRMKGLIDEV…GHAKSRPVRD (564 aa)) are a coiled coil. The tract at residues 262 to 460 (ERPGGNEITR…SGSTTTTRRS (199 aa)) is disordered. Positions 270-299 (TRGGSTSYGTGSETESPRNPSSAGSWNSGS) are enriched in low complexity. Residues Ser-281, Ser-291, and Ser-294 each carry the phosphoserine modification. A glycan (O-linked (GalNAc...) threonine) is linked at Thr-320. Lys-322 is covalently cross-linked (Isoglutamyl lysine isopeptide (Lys-Gln) (interchain with Q-41 in alpha-2-antiplasmin)). An Isoglutamyl lysine isopeptide (Gln-Lys) (interchain with K-?) cross-link involves residue Gln-347. Ser-351 carries O-linked (GalNAc...) serine glycosylation. Positions 354 to 391 (PGSTGTWNPGSSERGSAGHWTSESSVSGSTGQWHSESG) are enriched in polar residues. Ser-364 is modified (phosphoserine; by FAM20C). Residue Gln-385 forms an Isoglutamyl lysine isopeptide (Gln-Lys) (interchain with K-?) linkage. Thr-412 is subject to Phosphothreonine. The span at 424–449 (TRREYHTEKLVTSKGDKELRTGKEKV) shows a compositional bias: basic and acidic residues. Residues 450-460 (TSGSTTTTRRS) show a composition bias toward low complexity. Ser-451 carries the post-translational modification Phosphoserine. Ser-453 carries an N-linked (GlcNAc...) asparagine; in variant Caracas-2 glycan. A disulfide bond links Cys-461 and Cys-491. Ser-501 carries the phosphoserine modification. Thr-505 is modified (phosphothreonine). Ser-524 bears the Phosphoserine; by FAM20C mark. Isoglutamyl lysine isopeptide (Lys-Gln) (interchain with Q-?) cross-links involve residues Lys-527 and Lys-558. The interval 543-638 (ETESRGSESG…VRDCDDVLQT (96 aa)) is disordered. The residue at position 560 (Ser-560) is a Phosphoserine; by FAM20C. The residue at position 565 (Pro-565) is a 4-hydroxyproline; by P4HA1. Isoglutamyl lysine isopeptide (Lys-Gln) (interchain with Q-?) cross-links involve residues Lys-575, Lys-581, and Lys-599. The segment covering 575 to 589 (KSSSYSKQFTSSTSY) has biased composition (low complexity). Positions 594 to 617 (STFESKSYKMADEAGSEADHEGTH) are enriched in basic and acidic residues. The residue at position 609 (Ser-609) is a Phosphoserine; by FAM20C. A compositionally biased stretch (basic residues) spans 618–627 (STKRGHAKSR). The Fibrinogen C-terminal domain occupies 623–864 (HAKSRPVRDC…AVRMKIRPLV (242 aa)). N-linked (GlcNAc...) asparagine glycosylation occurs at Asn-686. The Ca(2+) site is built by Asp-791, Asp-793, Trp-795, and Glu-797. Cys-799 and Cys-812 are joined by a disulfide.

Heterohexamer; disulfide linked. Contains 2 sets of 3 non-identical chains (alpha, beta and gamma). The 2 heterotrimers are in head to head conformation with the N-termini in a small central domain. In terms of assembly, (Microbial infection) Interacts with Staphylococcus aureus protein Fib; this interaction inhibits fibrinogen-dependent platelet aggregation and protects the bacteria form phagocytosis. The alpha chain is normally not N-glycosylated, even though glycosylation at Asn-686 was observed when a fragment of the protein was expressed in insect cells. It is well known that heterologous expression of isolated domains can lead to adventitious protein modifications. Besides, glycosylation at Asn-686 is supported by large-scale glycoproteomics studies, but the evidence is still quite tenuous. Most likely, Asn-686 is not glycosylated in the healthy human body, or only with low efficiency. Post-translationally, O-glycosylated. In terms of processing, forms F13A-mediated cross-links between a glutamine and the epsilon-amino group of a lysine residue, forming fibronectin-fibrinogen heteropolymers. About one-third of the alpha chains in the molecules in blood were found to be phosphorylated. Post-translationally, conversion of fibrinogen to fibrin is triggered by thrombin, which cleaves fibrinopeptides A and B from alpha and beta chains, and thus exposes the N-terminal polymerization sites responsible for the formation of the soft clot. The soft clot is converted into the hard clot by factor XIIIA which catalyzes the epsilon-(gamma-glutamyl)lysine cross-linking between gamma chains (stronger) and between alpha chains (weaker) of different monomers. In terms of processing, phosphorylated by FAM20C in the extracellular medium. As to expression, detected in blood plasma (at protein level).

The protein localises to the secreted. Cleaved by the protease thrombin to yield monomers which, together with fibrinogen beta (FGB) and fibrinogen gamma (FGG), polymerize to form an insoluble fibrin matrix. Fibrin has a major function in hemostasis as one of the primary components of blood clots. In addition, functions during the early stages of wound repair to stabilize the lesion and guide cell migration during re-epithelialization. Was originally thought to be essential for platelet aggregation, based on in vitro studies using anticoagulated blood. However, subsequent studies have shown that it is not absolutely required for thrombus formation in vivo. Enhances expression of SELP in activated platelets via an ITGB3-dependent pathway. Maternal fibrinogen is essential for successful pregnancy. Fibrin deposition is also associated with infection, where it protects against IFNG-mediated hemorrhage. May also facilitate the immune response via both innate and T-cell mediated pathways. The polypeptide is Fibrinogen alpha chain (FGA) (Homo sapiens (Human)).